The primary structure comprises 1316 residues: DNA-directed RNA polymerase subunit beta' (1316 aa).

Residues Cys60, Cys62, Cys75, and Cys78 each contribute to the Zn(2+) site. Residues Asp535, Asp537, and Asp539 each coordinate Mg(2+). The Zn(2+) site is built by Cys891, Cys968, Cys975, and Cys978.

The protein belongs to the RNA polymerase beta' chain family. In terms of assembly, the RNAP catalytic core consists of 2 alpha, 1 beta, 1 beta' and 1 omega subunit. When a sigma factor is associated with the core the holoenzyme is formed, which can initiate transcription. Mg(2+) is required as a cofactor. Requires Zn(2+) as cofactor.

It catalyses the reaction RNA(n) + a ribonucleoside 5'-triphosphate = RNA(n+1) + diphosphate. Its function is as follows. DNA-dependent RNA polymerase catalyzes the transcription of DNA into RNA using the four ribonucleoside triphosphates as substrates. This Mycobacterium leprae (strain Br4923) protein is DNA-directed RNA polymerase subunit beta'.